Consider the following 196-residue polypeptide: Nucleoid occlusion factor SlmA (196 aa).

Residues 7-68 (TNRREEILQA…GLIEFIEDSI (62 aa)) form the HTH tetR-type domain. Residues 31 to 50 (TTAKLAAQVGVSEAALYRHF) constitute a DNA-binding region (H-T-H motif). Residues 115 to 142 (EQDRLQSRINQLFERIETQLRQVLRERK) are a coiled coil.

It belongs to the nucleoid occlusion factor SlmA family. Homodimer. Interacts with FtsZ.

The protein resides in the cytoplasm. Its subcellular location is the nucleoid. Required for nucleoid occlusion (NO) phenomenon, which prevents Z-ring formation and cell division over the nucleoid. Acts as a DNA-associated cell division inhibitor that binds simultaneously chromosomal DNA and FtsZ, and disrupts the assembly of FtsZ polymers. SlmA-DNA-binding sequences (SBS) are dispersed on non-Ter regions of the chromosome, preventing FtsZ polymerization at these regions. The polypeptide is Nucleoid occlusion factor SlmA (Photobacterium profundum (strain SS9)).